We begin with the raw amino-acid sequence, 732 residues long: Catalase-peroxidase (732 aa).

The N-terminal stretch at 1–15 (MSTESKCPFAGGAYA) is a signal peptide. The segment at residues 96 to 219 (WHSAGTYRIY…LGAVQMGLIY (124 aa)) is a cross-link (tryptophyl-tyrosyl-methioninium (Trp-Tyr) (with M-245)). His97 serves as the catalytic Proton acceptor. Positions 219–245 (YVNPEGPNGNPDPLASARDIRETFARM) form a cross-link, tryptophyl-tyrosyl-methioninium (Tyr-Met) (with W-96). His260 serves as a coordination point for heme b.

The protein belongs to the peroxidase family. Peroxidase/catalase subfamily. As to quaternary structure, homodimer or homotetramer. Heme b serves as cofactor. Formation of the three residue Trp-Tyr-Met cross-link is important for the catalase, but not the peroxidase activity of the enzyme.

The enzyme catalyses H2O2 + AH2 = A + 2 H2O. It catalyses the reaction 2 H2O2 = O2 + 2 H2O. Its function is as follows. Bifunctional enzyme with both catalase and broad-spectrum peroxidase activity. The chain is Catalase-peroxidase from Acidobacterium capsulatum (strain ATCC 51196 / DSM 11244 / BCRC 80197 / JCM 7670 / NBRC 15755 / NCIMB 13165 / 161).